The chain runs to 135 residues: T-cell receptor gamma chain V region 5/10-13 (135 aa).

A signal peptide spans 1–18; the sequence is MLLLRWPTFCCLWVFGLG. The tract at residues 19–114 is v segment; it reads QLEQTELSVT…DEATYYCAVC (96 aa). The j segment stretch occupies residues 115 to 135; it reads RSGTSWVKIFAKGTKLVVIPP.

The polypeptide is T-cell receptor gamma chain V region 5/10-13 (Tcrg-V1) (Mus musculus (Mouse)).